The primary structure comprises 153 residues: Probable disulfide formation protein (153 aa).

A helical membrane pass occupies residues 4–23; sequence DTRLYLAWLVALAATLGSLY. An intrachain disulfide couples Cys-33 to Cys-36. 2 helical membrane passes run 38–57 and 64–81; these read AQRI…AFVG and YVLP…FQNL. Cys-93 and Cys-101 are disulfide-bonded. Residues 117-139 traverse the membrane as a helical segment; the sequence is RALTIPVLSMIAFALILALLSWP.

Belongs to the DsbB family. BdbC subfamily.

It localises to the cell membrane. Functionally, required for disulfide bond formation in some proteins. The protein is Probable disulfide formation protein of Deinococcus radiodurans (strain ATCC 13939 / DSM 20539 / JCM 16871 / CCUG 27074 / LMG 4051 / NBRC 15346 / NCIMB 9279 / VKM B-1422 / R1).